A 291-amino-acid polypeptide reads, in one-letter code: Pyridoxal 5'-phosphate synthase subunit PdxS (291 aa).

Aspartate 23 provides a ligand contact to D-ribose 5-phosphate. The active-site Schiff-base intermediate with D-ribose 5-phosphate is lysine 80. Glycine 152 serves as a coordination point for D-ribose 5-phosphate. Arginine 164 is a binding site for D-glyceraldehyde 3-phosphate. D-ribose 5-phosphate is bound by residues glycine 213 and 234–235 (GS).

It belongs to the PdxS/SNZ family. In terms of assembly, in the presence of PdxT, forms a dodecamer of heterodimers.

The catalysed reaction is aldehydo-D-ribose 5-phosphate + D-glyceraldehyde 3-phosphate + L-glutamine = pyridoxal 5'-phosphate + L-glutamate + phosphate + 3 H2O + H(+). The protein operates within cofactor biosynthesis; pyridoxal 5'-phosphate biosynthesis. In terms of biological role, catalyzes the formation of pyridoxal 5'-phosphate from ribose 5-phosphate (RBP), glyceraldehyde 3-phosphate (G3P) and ammonia. The ammonia is provided by the PdxT subunit. Can also use ribulose 5-phosphate and dihydroxyacetone phosphate as substrates, resulting from enzyme-catalyzed isomerization of RBP and G3P, respectively. The chain is Pyridoxal 5'-phosphate synthase subunit PdxS from Haemophilus influenzae (strain ATCC 51907 / DSM 11121 / KW20 / Rd).